We begin with the raw amino-acid sequence, 415 residues long: MIIAIQTLIFFRQSLLTALDRLLRPYFQKFALSLTKSSFESDDDEPDENVFAEYDDEKGVIFFPPMYVQRYAAIVDCLLDERWSGKLDKVVDLGYHDMSFIKYLKEVSGIKSILGVDLETIPLQCSSDLLSCNEYAPKRETPLQISLLQGNAADPDYRLIGCDAVIAIEMIEHMLPHDLERLVHTVFAFIKPWIVIFTTPNDFKDVITGDINICKFNEKYLHRLNCTTLQVKKFSKTTQGLMAKNKVDALVHTREVVEEIKHLTKMLNFNKSGLNQQDEKTHIWYNFNWGENAPYWNQYYKIVREYNYPFETKSDDCRILDLISDEMNRLIDLQYDDILSVDLNKLEIPLQHLMQTVQHITDDVENVRELLEWNGYEVVDDMVIYSRLAIDNVTIDSQIDDWQENESVSDVKKFN.

Ser-99 and Asp-117 together coordinate S-adenosyl-L-methionine. Positions 169, 172, and 173 each coordinate Mg(2+).

It belongs to the methyltransferase superfamily. HEN1 family. The cofactor is Mg(2+).

The protein localises to the cytoplasm. The catalysed reaction is small RNA 3'-end nucleotide + S-adenosyl-L-methionine = small RNA 3'-end 2'-O-methylnucleotide + S-adenosyl-L-homocysteine + H(+). In terms of biological role, methyltransferase that adds a 2'-O-methyl group at the 3'-end of piRNAs, a class of 24 to 30 nucleotide RNAs that are generated by a Dicer-independent mechanism and are primarily derived from transposons and other repeated sequence elements. This probably protects the 3'-end of piRNAs from uridylation activity and subsequent degradation. Stabilization of piRNAs is essential for gametogenesis. In Bombyx mori (Silk moth), this protein is Small RNA 2'-O-methyltransferase.